The chain runs to 70 residues: Frenatin 4.1 (70 aa).

Positions 1–22 are cleaved as a signal peptide; that stretch reads MAFLKKSLFLVLFLGLVNLSIC. Positions 23–46 are excised as a propeptide; it reads EEEKREEENKEEEDENEALSEVKR. Position 68 is a lysine amide (Lys68).

This sequence belongs to the frog skin active peptide (FSAP) family. Frenatin subfamily. As to expression, expressed by the skin glands.

Its subcellular location is the secreted. It is found in the target cell membrane. Functionally, peptide with unknown function. Does not show antimicrobial activity against S.aureus (MIC&gt;512 ug/mL), E.coli (MIC&gt;512 ug/mL) and C.albicans (MIC&gt;512 ug/mL). Does not show hemolytic activity. Its function is as follows. Antimicrobial peptide with activity against E.coli (MIC=128 ug/mL or 54 uM) and C.albicans (MIC=256 ug/mL or 108 uM). Does not show activity against S.aureus (MIC&gt;512 ug/mL). Does not show hemolytic activity. The protein is Frenatin 4.1 of Nyctimystes infrafrenatus (White-lipped tree frog).